The following is a 94-amino-acid chain: Acylphosphatase (94 aa).

The Acylphosphatase-like domain maps to 7–94; that stretch reads RLTARITGVV…GEFDDFRIID (88 aa). Residues arginine 22 and asparagine 40 contribute to the active site.

This sequence belongs to the acylphosphatase family.

The enzyme catalyses an acyl phosphate + H2O = a carboxylate + phosphate + H(+). The polypeptide is Acylphosphatase (acyP) (Paenarthrobacter aurescens (strain TC1)).